A 259-amino-acid polypeptide reads, in one-letter code: Protein odd-skipped-related 1 (259 aa).

3 consecutive C2H2-type zinc fingers follow at residues 168 to 190, 196 to 218, and 224 to 246; these read FVCK…ERTH, YTCD…RYIH, and FKCQ…KTLH.

Belongs to the Odd C2H2-type zinc-finger protein family. At early gastrula stage, expressed in the involuting mesoderm and endoderm. During neurulation, expressed in the pronephric primordium, following expression of osr2. During tailbud (stage 35), expressed in the rectal diverticulum and in the kidney ducts.

The protein localises to the nucleus. Functionally, transcriptional repressor. Required for pronephric kidney development. The protein is Protein odd-skipped-related 1 of Xenopus laevis (African clawed frog).